The sequence spans 396 residues: Tryptophan synthase beta chain (396 aa).

At Lys86 the chain carries N6-(pyridoxal phosphate)lysine.

It belongs to the TrpB family. In terms of assembly, tetramer of two alpha and two beta chains. Pyridoxal 5'-phosphate is required as a cofactor.

The enzyme catalyses (1S,2R)-1-C-(indol-3-yl)glycerol 3-phosphate + L-serine = D-glyceraldehyde 3-phosphate + L-tryptophan + H2O. It functions in the pathway amino-acid biosynthesis; L-tryptophan biosynthesis; L-tryptophan from chorismate: step 5/5. Its function is as follows. The beta subunit is responsible for the synthesis of L-tryptophan from indole and L-serine. The polypeptide is Tryptophan synthase beta chain (Proteus mirabilis (strain HI4320)).